We begin with the raw amino-acid sequence, 176 residues long: Peptide methionine sulfoxide reductase MsrA (176 aa).

Residue Cys-10 is part of the active site.

This sequence belongs to the MsrA Met sulfoxide reductase family.

The catalysed reaction is L-methionyl-[protein] + [thioredoxin]-disulfide + H2O = L-methionyl-(S)-S-oxide-[protein] + [thioredoxin]-dithiol. It catalyses the reaction [thioredoxin]-disulfide + L-methionine + H2O = L-methionine (S)-S-oxide + [thioredoxin]-dithiol. In terms of biological role, has an important function as a repair enzyme for proteins that have been inactivated by oxidation. Catalyzes the reversible oxidation-reduction of methionine sulfoxide in proteins to methionine. The protein is Peptide methionine sulfoxide reductase MsrA of Leptospira borgpetersenii serovar Hardjo-bovis (strain L550).